A 546-amino-acid polypeptide reads, in one-letter code: Chaperonin GroEL (546 aa).

ATP-binding positions include 29 to 32, lysine 50, 86 to 90, glycine 414, and aspartate 495; these read TLGP and DGTTT. The tract at residues 526–546 is disordered; the sequence is AKEGAPAGGGMPDMGGMGGMM. Residues 531–546 show a composition bias toward gly residues; the sequence is PAGGGMPDMGGMGGMM.

It belongs to the chaperonin (HSP60) family. As to quaternary structure, forms a cylinder of 14 subunits composed of two heptameric rings stacked back-to-back. Interacts with the co-chaperonin GroES.

It is found in the cytoplasm. It catalyses the reaction ATP + H2O + a folded polypeptide = ADP + phosphate + an unfolded polypeptide.. Functionally, together with its co-chaperonin GroES, plays an essential role in assisting protein folding. The GroEL-GroES system forms a nano-cage that allows encapsulation of the non-native substrate proteins and provides a physical environment optimized to promote and accelerate protein folding. The protein is Chaperonin GroEL of Jannaschia sp. (strain CCS1).